Reading from the N-terminus, the 1346-residue chain is Zinc finger protein 541 (1346 aa).

Disordered stretches follow at residues 1–34 (MDQY…DTLN) and 113–136 (EADE…SSPQ). Positions 21–32 (FSESQGLNCSDT) are enriched in polar residues. C2H2-type zinc fingers lie at residues 140–162 (LDCS…YLTH), 168–190 (HVCK…MLTH), and 196–220 (FVCI…YEVH). 4 disordered regions span residues 235 to 271 (ACGD…LLPH), 283 to 328 (VHQK…AAPA), 437 to 472 (SAVP…EDAL), and 578 to 744 (SQLP…GGYR). Composition is skewed to low complexity over residues 294 to 323 (PAGA…PAGP) and 440 to 458 (PSRE…SPSE). Residues 671-685 (PDISSLAKQLRSSKG) show a composition bias toward polar residues. Residues 838–860 (FVCKNCSQMFYTEKGLSSHMCFH) form a C2H2-type 4 zinc finger. The tract at residues 931–971 (AMGQEKDGEERDSKESSQQRKRKKRPPPSTAGEPGPAGCHQ) is disordered. Basic and acidic residues predominate over residues 934–948 (QEKDGEERDSKESSQ). The ELM2 domain maps to 1053-1145 (PHINIGSRFQ…VALETLLLRG (93 aa)). Positions 1160-1211 (TGSDVWTPIEKRLFKKAFYAHKKDFYLIHKMIQTKTVAQCVEYYYIWKKMIK) constitute an SANT domain. The interval 1224–1281 (VKREPEEVERTEEKVPCSPRERPSHHPTPKLKTKSYRRESILSSSPNAGSKRTPELLG) is disordered. Positions 1234–1247 (TEEKVPCSPRERPS) are enriched in basic and acidic residues. The segment covering 1248 to 1258 (HHPTPKLKTKS) has biased composition (basic residues). Positions 1264 to 1273 (ILSSSPNAGS) are enriched in polar residues. The segment at 1289–1311 (FPCRECERVFDKIKSRNAHMKRH) adopts a C2H2-type 5 zinc-finger fold.

Interacts with DNTTIP1. Identified in a complex with KCDT19, HDAC1 and HSPA2. Component of a histone deacetylase complex containing DNTTIP1, ZNF541, HDAC1 and HDAC2. Identified in a complex with HDAC1, HDAC2, DNTTIP1 and KCTD19.

The protein localises to the nucleus. Functionally, transcription regulator which is essential for male fertility and for the completion of meiotic prophase in spermatocytes. Regulates progression of the pachytene stage of meiotic prophase by activating the expression of genes involved in meiosis during spermatogenesis. Maintains the repression of pre-pachytene transcriptional programs, including meiotic double-strand breaks (DSB) formation genes in pachytene spermatocytes and suppresses aberrant DSB formation after mid-pachytene, thus ensuring meiosis progression. This is Zinc finger protein 541 (ZNF541) from Homo sapiens (Human).